Consider the following 412-residue polypeptide: uncharacterized protein (412 aa).

His49 contributes to the Zn(2+) binding site. Glu52 functions as the Proton acceptor in the catalytic mechanism. Residues His53 and Glu129 each contribute to the Zn(2+) site.

Belongs to the peptidase M16 family. Zn(2+) is required as a cofactor.

This is an uncharacterized protein from Rickettsia bellii (strain RML369-C).